Here is a 350-residue protein sequence, read N- to C-terminus: Holliday junction branch migration complex subunit RuvB (350 aa).

Positions 4 to 184 (ADRIVTASSR…FGIVQRLEFY (181 aa)) are large ATPase domain (RuvB-L). ATP is bound by residues Ile23, Arg24, Gly65, Lys68, Thr69, Thr70, 131–133 (EDF), Arg174, Tyr184, and Arg221. Thr69 provides a ligand contact to Mg(2+). Residues 185–255 (STEDLATIVR…IADLALNMLD (71 aa)) form a small ATPAse domain (RuvB-S) region. A head domain (RuvB-H) region spans residues 258–350 (ERGFDHQDRR…TPDLFEGDIV (93 aa)). DNA is bound by residues Arg294, Arg313, and Arg318.

Belongs to the RuvB family. In terms of assembly, homohexamer. Forms an RuvA(8)-RuvB(12)-Holliday junction (HJ) complex. HJ DNA is sandwiched between 2 RuvA tetramers; dsDNA enters through RuvA and exits via RuvB. An RuvB hexamer assembles on each DNA strand where it exits the tetramer. Each RuvB hexamer is contacted by two RuvA subunits (via domain III) on 2 adjacent RuvB subunits; this complex drives branch migration. In the full resolvosome a probable DNA-RuvA(4)-RuvB(12)-RuvC(2) complex forms which resolves the HJ.

It is found in the cytoplasm. It carries out the reaction ATP + H2O = ADP + phosphate + H(+). Functionally, the RuvA-RuvB-RuvC complex processes Holliday junction (HJ) DNA during genetic recombination and DNA repair, while the RuvA-RuvB complex plays an important role in the rescue of blocked DNA replication forks via replication fork reversal (RFR). RuvA specifically binds to HJ cruciform DNA, conferring on it an open structure. The RuvB hexamer acts as an ATP-dependent pump, pulling dsDNA into and through the RuvAB complex. RuvB forms 2 homohexamers on either side of HJ DNA bound by 1 or 2 RuvA tetramers; 4 subunits per hexamer contact DNA at a time. Coordinated motions by a converter formed by DNA-disengaged RuvB subunits stimulates ATP hydrolysis and nucleotide exchange. Immobilization of the converter enables RuvB to convert the ATP-contained energy into a lever motion, pulling 2 nucleotides of DNA out of the RuvA tetramer per ATP hydrolyzed, thus driving DNA branch migration. The RuvB motors rotate together with the DNA substrate, which together with the progressing nucleotide cycle form the mechanistic basis for DNA recombination by continuous HJ branch migration. Branch migration allows RuvC to scan DNA until it finds its consensus sequence, where it cleaves and resolves cruciform DNA. This Stutzerimonas stutzeri (strain A1501) (Pseudomonas stutzeri) protein is Holliday junction branch migration complex subunit RuvB.